An 89-amino-acid polypeptide reads, in one-letter code: Small ribosomal subunit protein uS14 (89 aa).

The protein belongs to the universal ribosomal protein uS14 family. In terms of assembly, part of the 30S ribosomal subunit. Contacts proteins S3 and S10.

In terms of biological role, binds 16S rRNA, required for the assembly of 30S particles and may also be responsible for determining the conformation of the 16S rRNA at the A site. The polypeptide is Small ribosomal subunit protein uS14 (Akkermansia muciniphila (strain ATCC BAA-835 / DSM 22959 / JCM 33894 / BCRC 81048 / CCUG 64013 / CIP 107961 / Muc)).